The chain runs to 636 residues: ATP-dependent zinc metalloprotease FtsH 1 (636 aa).

Residues 1–18 are Cytoplasmic-facing; it reads MKLSPPKKNLPPQKNNEP. Residues 19-39 traverse the membrane as a helical segment; sequence PFPYLRLLVQVGIALFLVWIW. Over 40 to 126 the chain is Periplasmic; it reads QESLHKATVS…YGSVKPSLLS (87 aa). The helical transmembrane segment at 127–147 threads the bilayer; that stretch reads QILFSWVVPILIFFLVWFALA. Over 148-636 the chain is Cytoplasmic; sequence RFMGGGGAGY…KEAPSYSSTL (489 aa). 220–227 provides a ligand contact to ATP; sequence GPPGTGKT. His-442 is a binding site for Zn(2+). Glu-443 is a catalytic residue. Residues His-446 and Asp-519 each coordinate Zn(2+).

It in the central section; belongs to the AAA ATPase family. The protein in the C-terminal section; belongs to the peptidase M41 family. As to quaternary structure, homohexamer. Zn(2+) is required as a cofactor.

The protein localises to the cell inner membrane. Functionally, acts as a processive, ATP-dependent zinc metallopeptidase for both cytoplasmic and membrane proteins. Plays a role in the quality control of integral membrane proteins. The protein is ATP-dependent zinc metalloprotease FtsH 1 of Methylacidiphilum infernorum (isolate V4) (Methylokorus infernorum (strain V4)).